The sequence spans 188 residues: Large ribosomal subunit protein eL18 (188 aa).

Residue lysine 119 forms a Glycyl lysine isopeptide (Lys-Gly) (interchain with G-Cter in SUMO2) linkage. Residue serine 130 is modified to Phosphoserine. The disordered stretch occupies residues 151–188; it reads HFGKAPGTPHSHTKPYVRSKGRKFERARGRRASRGYKN. Residue threonine 158 is modified to Phosphothreonine. 2 stretches are compositionally biased toward basic residues: residues 161–171 and 178–188; these read SHTKPYVRSKG and RGRRASRGYKN. Lysine 164 is covalently cross-linked (Glycyl lysine isopeptide (Lys-Gly) (interchain with G-Cter in SUMO2)).

This sequence belongs to the eukaryotic ribosomal protein eL18 family. As to quaternary structure, component of the large ribosomal subunit.

It localises to the cytoplasm. Its subcellular location is the cytosol. It is found in the rough endoplasmic reticulum. Functionally, component of the large ribosomal subunit. The ribosome is a large ribonucleoprotein complex responsible for the synthesis of proteins in the cell. The polypeptide is Large ribosomal subunit protein eL18 (RPL18) (Homo sapiens (Human)).